Consider the following 438-residue polypeptide: EF-hand calcium-binding domain-containing protein 3 (438 aa).

EF-hand domains are found at residues 47 to 82 (SQMR…LGMN) and 83 to 118 (LTKH…KNRF). Positions 96, 98, 100, 102, and 107 each coordinate Ca(2+). Tyrosine 279 carries the phosphotyrosine modification. The segment at 413 to 438 (SSSDISECDTDTGRKRKRKGFKGFRQ) is disordered. Positions 426-438 (RKRKRKGFKGFRQ) are enriched in basic residues.

The protein is EF-hand calcium-binding domain-containing protein 3 (EFCAB3) of Bos taurus (Bovine).